We begin with the raw amino-acid sequence, 147 residues long: Large ribosomal subunit protein bL9 (147 aa).

This sequence belongs to the bacterial ribosomal protein bL9 family.

Binds to the 23S rRNA. The polypeptide is Large ribosomal subunit protein bL9 (Geobacter sp. (strain M21)).